A 118-amino-acid chain; its full sequence is Large ribosomal subunit protein bL20 (118 aa).

The protein belongs to the bacterial ribosomal protein bL20 family.

Functionally, binds directly to 23S ribosomal RNA and is necessary for the in vitro assembly process of the 50S ribosomal subunit. It is not involved in the protein synthesizing functions of that subunit. The sequence is that of Large ribosomal subunit protein bL20 from Desulfovibrio desulfuricans (strain ATCC 27774 / DSM 6949 / MB).